We begin with the raw amino-acid sequence, 532 residues long: Vesicular acetylcholine transporter (532 aa).

Residues 1–33 (MESAEPAGQARAAATKLSEAVGAALQEPRRQRR) are Cytoplasmic-facing. The chain crosses the membrane as a helical span at residues 34 to 54 (LVLVIVCVALLLDNMLYMVIV). Over 55–125 (PIVPDYIAHM…PTESEDVKIG (71 aa)) the chain is Lumenal, vesicle. Residues asparagine 89 and asparagine 96 are each glycosylated (N-linked (GlcNAc...) asparagine). Residues 126–146 (VLFASKAILQLLVNPLSGPFI) form a helical membrane-spanning segment. Over 147-152 (DRMSYD) the chain is Cytoplasmic. The helical transmembrane segment at 153–173 (VPLLIGLGVMFASTVLFAFAE) threads the bilayer. At 174–182 (DYATLFAAR) the chain is on the lumenal, vesicle side. The chain crosses the membrane as a helical span at residues 183-203 (SLQGLGSAFADTSGIAMIADK). Residues 204–213 (YPEEPERSRA) are Cytoplasmic-facing. Residues 214-234 (LGVALAFISFGSLVAPPFGGI) traverse the membrane as a helical segment. Topologically, residues 235–242 (LYEFAGKR) are lumenal, vesicle. The helical transmembrane segment at 243 to 263 (VPFLVLAAVSLFDALLLLAVA) threads the bilayer. At 264–289 (KPFSAAARARANLPVGTPIHRLMLDP) the chain is on the cytoplasmic side. A helical transmembrane segment spans residues 290 to 310 (YIAVVAGALTTCNIPLAFLEP). Residues 311–325 (TIATWMKHTMAASEW) are Lumenal, vesicle-facing. The helical transmembrane segment at 326-346 (EMGMAWLPAFVPHVLGVYLTV) threads the bilayer. Topologically, residues 347–356 (RLAARYPHLQ) are cytoplasmic. Residues 357–377 (WLYGALGLAVIGASSCIVPAC) traverse the membrane as a helical segment. Topologically, residues 378–388 (RSFAPLVVSLC) are lumenal, vesicle. A helical membrane pass occupies residues 389-409 (GLCFGIALVDTALLPTLAFLV). The Cytoplasmic segment spans residues 410-422 (DVRHVSVYGSVYA). The helical transmembrane segment at 423–443 (IADISYSVAYALGPIVAGHIV) threads the bilayer. Residues 444–447 (HSLG) lie on the Lumenal, vesicle side of the membrane. Residues 448–468 (FEQLSLGMGLANLLYAPVLLL) form a helical membrane-spanning segment. Over 469–532 (LRNVGLLTRS…DDYNYYYTRS (64 aa)) the chain is Cytoplasmic. The interval 471-532 (NVGLLTRSRS…DDYNYYYTRS (62 aa)) is mediates interaction with SEC14L1. The disordered stretch occupies residues 502-523 (RPVSGQDGEPRSPPGPFDACED).

This sequence belongs to the major facilitator superfamily. Vesicular transporter family. As to quaternary structure, interacts with SEC14L1. As to expression, peripheral and central cholinergic nervous systems.

The protein resides in the cytoplasmic vesicle. The protein localises to the secretory vesicle. It localises to the synaptic vesicle membrane. The enzyme catalyses acetylcholine(out) + 2 H(+)(in) = acetylcholine(in) + 2 H(+)(out). It catalyses the reaction choline(in) + 2 H(+)(out) = choline(out) + 2 H(+)(in). The catalysed reaction is serotonin(in) + 2 H(+)(out) = serotonin(out) + 2 H(+)(in). With respect to regulation, potently inhibited by L-vesamicol, reserpine and tetrabenazine. Functionally, electrogenic antiporter that exchanges one cholinergic neurotransmitter, acetylcholine or choline, with two intravesicular protons across the membrane of synaptic vesicles. Uses the electrochemical proton gradient established by the V-type proton-pump ATPase to store neurotransmitters inside the vesicles prior to their release via exocytosis. Determines cholinergic vesicular quantal size at presynaptic nerve terminals in developing neuro-muscular junctions with an impact on motor neuron differentiation and innervation pattern. Part of forebrain cholinergic system, regulates hippocampal synapse transmissions that underlie spatial memory formation. Can transport serotonin. This chain is Vesicular acetylcholine transporter (SLC18A3), found in Homo sapiens (Human).